Reading from the N-terminus, the 223-residue chain is Putative PAN domain-containing protein R486 (223 aa).

A signal peptide spans 1-23; the sequence is MSQTAIIIWIVVIIILLVLGGLG. Residues 39–73 are disordered; sequence PTPINPPSSITPIQPINPPSSITPIQPSGPPSGGN. The segment covering 45-64 has biased composition (low complexity); the sequence is PSSITPIQPINPPSSITPIQ. PAN domains are found at residues 80 to 155 and 159 to 223; these read CPAY…EDGC and ARYN…KMPH. Disulfide bonds link Cys-80-Cys-155 and Cys-109-Cys-131. Residues Asn-162, Asn-189, and Asn-213 are each glycosylated (N-linked (GlcNAc...) asparagine; by host). Cys-182 and Cys-204 are disulfide-bonded.

The protein localises to the secreted. Its subcellular location is the virion. This Acanthamoeba polyphaga mimivirus (APMV) protein is Putative PAN domain-containing protein R486.